We begin with the raw amino-acid sequence, 169 residues long: Large ribosomal subunit protein uL10 (169 aa).

It belongs to the universal ribosomal protein uL10 family. In terms of assembly, part of the ribosomal stalk of the 50S ribosomal subunit. The N-terminus interacts with L11 and the large rRNA to form the base of the stalk. The C-terminus forms an elongated spine to which L12 dimers bind in a sequential fashion forming a multimeric L10(L12)X complex.

Functionally, forms part of the ribosomal stalk, playing a central role in the interaction of the ribosome with GTP-bound translation factors. The chain is Large ribosomal subunit protein uL10 from Lactobacillus delbrueckii subsp. bulgaricus (strain ATCC 11842 / DSM 20081 / BCRC 10696 / JCM 1002 / NBRC 13953 / NCIMB 11778 / NCTC 12712 / WDCM 00102 / Lb 14).